Consider the following 138-residue polypeptide: Sec-independent protein translocase protein TatB (138 aa).

The helical transmembrane segment at 1-21 (MFDIGATELLVIAIVAILVIG) threads the bilayer. Positions 74 to 138 (MAKHPADQMQ…EPRLPLEGRD (65 aa)) are disordered. Positions 83-97 (QPLDAPDPALSAAEA) are enriched in low complexity. Residues 98 to 138 (RAAHTEAAKPARAAEETQADRASADEHPAASEPRLPLEGRD) are compositionally biased toward basic and acidic residues.

Belongs to the TatB family. The Tat system comprises two distinct complexes: a TatABC complex, containing multiple copies of TatA, TatB and TatC subunits, and a separate TatA complex, containing only TatA subunits. Substrates initially bind to the TatABC complex, which probably triggers association of the separate TatA complex to form the active translocon.

It is found in the cell inner membrane. Functionally, part of the twin-arginine translocation (Tat) system that transports large folded proteins containing a characteristic twin-arginine motif in their signal peptide across membranes. Together with TatC, TatB is part of a receptor directly interacting with Tat signal peptides. TatB may form an oligomeric binding site that transiently accommodates folded Tat precursor proteins before their translocation. The chain is Sec-independent protein translocase protein TatB from Erythrobacter litoralis (strain HTCC2594).